The chain runs to 284 residues: Orotidine 5'-phosphate decarboxylase (284 aa).

The Proton donor role is filled by Lys-95.

This sequence belongs to the OMP decarboxylase family. Type 2 subfamily.

The enzyme catalyses orotidine 5'-phosphate + H(+) = UMP + CO2. The protein operates within pyrimidine metabolism; UMP biosynthesis via de novo pathway; UMP from orotate: step 2/2. In Leptothrix cholodnii (strain ATCC 51168 / LMG 8142 / SP-6) (Leptothrix discophora (strain SP-6)), this protein is Orotidine 5'-phosphate decarboxylase.